Reading from the N-terminus, the 241-residue chain is Carboxy-S-adenosyl-L-methionine synthase (241 aa).

Residues tyrosine 38, 63–65 (GCS), 88–89 (DN), 116–117 (DI), asparagine 131, and arginine 198 contribute to the S-adenosyl-L-methionine site.

It belongs to the class I-like SAM-binding methyltransferase superfamily. Cx-SAM synthase family. As to quaternary structure, homodimer.

The catalysed reaction is prephenate + S-adenosyl-L-methionine = carboxy-S-adenosyl-L-methionine + 3-phenylpyruvate + H2O. Its function is as follows. Catalyzes the conversion of S-adenosyl-L-methionine (SAM) to carboxy-S-adenosyl-L-methionine (Cx-SAM). This is Carboxy-S-adenosyl-L-methionine synthase from Actinobacillus pleuropneumoniae serotype 7 (strain AP76).